A 781-amino-acid chain; its full sequence is Death domain-containing protein 1 (781 aa).

2 ZU5 domains span residues 167-301 (IMEK…VSCL) and 302-483 (KKES…VLHL). The Death domain occupies 679–764 (DNLLHWLAEE…DLAEELKFKW (86 aa)).

This chain is Death domain-containing protein 1 (DTHD1), found in Homo sapiens (Human).